Here is a 351-residue protein sequence, read N- to C-terminus: Anthranilate phosphoribosyltransferase (351 aa).

5-phospho-alpha-D-ribose 1-diphosphate is bound by residues G80, 83 to 84 (GD), T88, 90 to 93 (NIST), 108 to 116 (KHGNRSITS), and S120. G80 contributes to the anthranilate binding site. S92 provides a ligand contact to Mg(2+). Residue N111 coordinates anthranilate. R166 provides a ligand contact to anthranilate. 2 residues coordinate Mg(2+): D229 and E230.

It belongs to the anthranilate phosphoribosyltransferase family. Homodimer. Requires Mg(2+) as cofactor.

The enzyme catalyses N-(5-phospho-beta-D-ribosyl)anthranilate + diphosphate = 5-phospho-alpha-D-ribose 1-diphosphate + anthranilate. It participates in amino-acid biosynthesis; L-tryptophan biosynthesis; L-tryptophan from chorismate: step 2/5. Functionally, catalyzes the transfer of the phosphoribosyl group of 5-phosphorylribose-1-pyrophosphate (PRPP) to anthranilate to yield N-(5'-phosphoribosyl)-anthranilate (PRA). In Chlorobaculum parvum (strain DSM 263 / NCIMB 8327) (Chlorobium vibrioforme subsp. thiosulfatophilum), this protein is Anthranilate phosphoribosyltransferase.